The primary structure comprises 576 residues: Eukaryotic translation initiation factor 3 subunit L (576 aa).

Residues 330–536 form the PCI domain; it reads DAIRVFANIL…IHIADTKVAR (207 aa).

It belongs to the eIF-3 subunit L family. Component of the eukaryotic translation initiation factor 3 (eIF-3) complex, which is composed of 13 subunits: eif3a, eif3b, eif3c, eif3d, eif3e, eif3f, eif3g, eif3h, eif3i, eif3j, eif3k, eif3l and eif3m.

The protein localises to the cytoplasm. Functionally, component of the eukaryotic translation initiation factor 3 (eIF-3) complex, which is involved in protein synthesis of a specialized repertoire of mRNAs and, together with other initiation factors, stimulates binding of mRNA and methionyl-tRNAi to the 40S ribosome. The eIF-3 complex specifically targets and initiates translation of a subset of mRNAs involved in cell proliferation. This is Eukaryotic translation initiation factor 3 subunit L (eif3l) from Danio rerio (Zebrafish).